Reading from the N-terminus, the 93-residue chain is MPRSLKKGPFVDQHLFVKVANENEKGTKNVIKTWSRRSMIIPDMLGHTIAVHDGRKHIPVFVTESMVGHKLGEFALTRTFRGHVKDDRKGKRR.

The protein belongs to the universal ribosomal protein uS19 family.

Its function is as follows. Protein S19 forms a complex with S13 that binds strongly to the 16S ribosomal RNA. The sequence is that of Small ribosomal subunit protein uS19 from Renibacterium salmoninarum (strain ATCC 33209 / DSM 20767 / JCM 11484 / NBRC 15589 / NCIMB 2235).